We begin with the raw amino-acid sequence, 544 residues long: GDP-mannose 4,6-dehydratase sdnI (544 aa).

NADP(+) is bound by residues 16-21 (GITGQD), Arg41, 64-65 (DM), and 86-90 (LAAQS). Ser90 contributes to the substrate binding site. Residues Glu135 and Tyr157 each act as nucleophile in the active site. Tyr157 serves as a coordination point for substrate. Lys161 provides a ligand contact to NADP(+). Asn186 is a substrate binding site. The NADP(+) site is built by His187 and Arg192. Substrate contacts are provided by residues 192-200 (RGTTFVTRK), Gly219, Arg225, and 303-306 (RPVE). The segment at 366 to 406 (GETTSAVNSSPSSTAGDTYKASDGWSTSGAEGSEQTECSSV) is disordered. Polar residues-rich tracts occupy residues 368 to 381 (TTSAVNSSPSSTAG) and 389 to 404 (GWSTSGAEGSEQTECS).

This sequence belongs to the NAD(P)-dependent epimerase/dehydratase family. GDP-mannose 4,6-dehydratase subfamily. NADP(+) serves as cofactor.

It catalyses the reaction GDP-alpha-D-mannose = GDP-4-dehydro-alpha-D-rhamnose + H2O. The protein operates within antibiotic biosynthesis. In terms of biological role, GDP-mannose 4,6-dehydratase; part of the gene cluster that mediates the biosynthesis of sordarin and hypoxysordarin, glycoside antibiotics with a unique tetracyclic diterpene aglycone structure. First, the geranylgeranyl diphosphate synthase sdnC constructs GGDP from farnesyl diphosphate and isopentenyl diphosphate. The diterpene cyclase sdnA then catalyzes the cyclization of GGDP to afford cycloaraneosene. Cycloaraneosene is then hydroxylated four times by the putative cytochrome P450 monooxygenases sdnB, sdnE, sdnF and sdnH to give a hydroxylated cycloaraneosene derivative such as cycloaraneosene-8,9,13,19-tetraol. Although the order of the hydroxylations is unclear, at least C8, C9 and C13 of the cycloaraneosene skeleton are hydroxylated before the sordaricin formation. Dehydration of the 13-hydroxy group of the hydroxylated cycloaraneosene derivative might be catalyzed by an unassigned hypothetical protein such as sdnG and sdnP to construct the cyclopentadiene moiety. The FAD-dependent oxidoreductase sdnN is proposed to catalyze the oxidation at C9 of the hydroxylated cycloaraneosene derivative and also catalyze the Baeyer-Villiger oxidation to give the lactone intermediate. The presumed lactone intermediate would be hydrolyzed to give an acrolein moiety and a carboxylate moiety. Then, [4+2]cycloaddition would occur between the acrolein moiety and the cyclopentadiene moiety to give sordaricin. SdnN might also be involved in the [4+2]cycloaddition after the hypothesized oxidation to accommodate the oxidized product and prompt the [4+2]cycloaddition. GDP-6-deoxy-D-altrose may be biosynthesized from GDP-D-mannose by the putative GDP-mannose-4,6-dehydratase sdnI and the short-chain dehydrogenase sdnK. The glycosyltransferase sdnJ catalyzes the attachment of 6-deoxy-D-altrose onto the 19-hydroxy group of sordaricin to give 4'-O-demethylsordarin. The methyltransferase sdnD would complete the biosynthesis of sordarin. Sordarin can be further modified into hypoxysordarin. The unique acyl chain at the 3'-hydroxy group of hypoxysordarin would be constructed by an iterative type I PKS sdnO and the trans-acting polyketide methyltransferase sdnL. SdnL would be responsible for the introduction of an alpha-methyl group of the polyketide chain. Alternatively, the beta-lactamase-like protein sdnR might be responsible for the cleavage and transfer of the polyketide chain from the PKS sdnO to sordarin. Two putative cytochrome P450 monooxygenases, sdnQ and sdnT, might catalyze the epoxidations of the polyketide chain to complete the biosynthesis of hypoxysordarin. Transcriptional regulators sdnM and sdnS are presumably encoded for the transcriptional regulation of the expression of the sdn gene cluster. This is GDP-mannose 4,6-dehydratase sdnI from Sordaria araneosa (Pleurage araneosa).